Consider the following 451-residue polypeptide: Ubiquinone biosynthesis monooxygenase COQ6, mitochondrial (451 aa).

Belongs to the UbiH/COQ6 family. As to quaternary structure, component of a multi-subunit COQ enzyme complex. FAD serves as cofactor.

It is found in the mitochondrion inner membrane. The catalysed reaction is a 4-hydroxy-3-(all-trans-polyprenyl)benzoate + 2 reduced [2Fe-2S]-[ferredoxin] + O2 + 2 H(+) = a 3,4-dihydroxy-5-(all-trans-polyprenyl)benzoate + 2 oxidized [2Fe-2S]-[ferredoxin] + H2O. It carries out the reaction a 2-methoxy-6-(all-trans-polyprenyl)phenol + 2 reduced [2Fe-2S]-[ferredoxin] + O2 + 2 H(+) = a 2-methoxy-6-(all-trans-polyprenyl)benzene-1,4-diol + 2 oxidized [2Fe-2S]-[ferredoxin] + H2O. It participates in cofactor biosynthesis; ubiquinone biosynthesis. Functionally, FAD-dependent monooxygenase required for two non-consecutive steps during ubiquinone biosynthesis. Required for the C5-ring hydroxylation during ubiquinone biosynthesis by catalyzing the hydroxylation of 4-hydroxy-3-(all-trans-polyprenyl)benzoic acid to 3,4-dihydroxy-5-(all-trans-polyprenyl)benzoic acid. Also acts downstream of coq4, for the C1-hydroxylation during ubiquinone biosynthesis by catalyzing the hydroxylation of 2-methoxy-6-(all-trans-polyprenyl)phenol to 2-methoxy-6-(all-trans-polyprenyl)benzene-1,4-diol. The electrons required for the hydroxylation reaction are funneled indirectly to coq-6 from NADPH via a ferredoxin/ferredoxin reductase system. The sequence is that of Ubiquinone biosynthesis monooxygenase COQ6, mitochondrial from Caenorhabditis elegans.